The following is a 796-amino-acid chain: Vacuolar protein sorting-associated protein 35 (796 aa).

Ser-7 bears the Phosphoserine mark. 2 interaction with SNX3 regions span residues 25–44 (VQSF…DALK) and 205–215 (DREKRERERQE). The interval 438 to 796 (CYVLSNVLDY…EGPIYEGLIL (359 aa)) is interaction with SLC11A2. Residues 500 to 693 (SEDPDQQYLI…DKNGEELHGG (194 aa)) are interaction with IGF2R cytoplasmic domain. Ser-783 bears the Phosphoserine mark. Tyr-791 carries the phosphotyrosine modification.

Belongs to the VPS35 family. Component of the heterotrimeric retromer cargo-selective complex (CSC), also decribed as vacuolar protein sorting subcomplex (VPS), formed by VPS26 (VPS26A or VPS26B), VPS29 and VPS35. The CSC has a highly elongated structure with VPS26 and VPS29 binding independently at opposite distal ends of VPS35 as central platform. The CSC is believed to associate with variable sorting nexins to form functionally distinct retromer complex variants. The originally described retromer complex (also called SNX-BAR retromer) is a pentamer containing the CSC and a heterodimeric membrane-deforming subcomplex formed between SNX1 or SNX2 and SNX5 or SNX6 (also called SNX-BAR subcomplex); the respective CSC and SNX-BAR subcomplexes associate with low affinity. The CSC associates with SNX3 to form a SNX3-retromer complex. The CSC associates with SNX27, the WASH complex and the SNX-BAR subcomplex to form the SNX27-retromer complex. Interacts with VPS26A, VPS26B, VPS29, SNX1, SNX2, IGF2R, SNX3, GOLPH3, LRRK2, SLC11A2, WASHC2A, WASHC2C, FKBP15, WASHC1, RAB7A, SNX27, WASHC5, EHD1. Interacts with MAGEL2; leading to recruitment of the TRIM27:MAGEL2 E3 ubiquitin ligase complex retromer-containing endosomes. Interacts with SORCS2. As to quaternary structure, (Microbial infection) Interacts with human papillomavirus 16 minor capsid protein L2 (via C-terminus); this interaction mediates the transport of the capsid from the early endosome to the Golgi apparatus. As to expression, ubiquitous. Highly expressed in heart, brain, placenta, skeletal muscle, spleen, thymus, testis, ovary, small intestine, kidney and colon.

The protein resides in the cytoplasm. It localises to the membrane. It is found in the endosome. The protein localises to the early endosome. Its subcellular location is the late endosome. Acts as a component of the retromer cargo-selective complex (CSC). The CSC is believed to be the core functional component of retromer or respective retromer complex variants acting to prevent missorting of selected transmembrane cargo proteins into the lysosomal degradation pathway. The recruitment of the CSC to the endosomal membrane involves RAB7A and SNX3. The CSC seems to associate with the cytoplasmic domain of cargo proteins predominantly via VPS35; however, these interactions seem to be of low affinity and retromer SNX proteins may also contribute to cargo selectivity thus questioning the classical function of the CSC. The SNX-BAR retromer mediates retrograde transport of cargo proteins from endosomes to the trans-Golgi network (TGN) and is involved in endosome-to-plasma membrane transport for cargo protein recycling. The SNX3-retromer mediates the retrograde endosome-to-TGN transport of WLS distinct from the SNX-BAR retromer pathway. The SNX27-retromer is believed to be involved in endosome-to-plasma membrane trafficking and recycling of a broad spectrum of cargo proteins. The CSC seems to act as recruitment hub for other proteins, such as the WASH complex and TBC1D5. Required for retrograde transport of lysosomal enzyme receptor IGF2R and SLC11A2. Required to regulate transcytosis of the polymeric immunoglobulin receptor (pIgR-pIgA). Required for endosomal localization of WASHC2C. Mediates the association of the CSC with the WASH complex via WASHC2. Required for the endosomal localization of TBC1D5. Functionally, (Microbial infection) The heterotrimeric retromer cargo-selective complex (CSC) mediates the exit of human papillomavirus from the early endosome and the delivery to the Golgi apparatus. This chain is Vacuolar protein sorting-associated protein 35, found in Homo sapiens (Human).